We begin with the raw amino-acid sequence, 305 residues long: Ornithine carbamoyltransferase (305 aa).

Residues 52–55, Gln-79, Arg-103, and 130–133 contribute to the carbamoyl phosphate site; these read STRT and HPLQ. L-ornithine contacts are provided by residues Asn-162, Asp-224, and 228 to 229; that span reads SM. Residues 264–265 and Arg-292 each bind carbamoyl phosphate; that span reads CL.

Belongs to the aspartate/ornithine carbamoyltransferase superfamily. OTCase family.

Its subcellular location is the cytoplasm. It carries out the reaction carbamoyl phosphate + L-ornithine = L-citrulline + phosphate + H(+). It participates in amino-acid biosynthesis; L-arginine biosynthesis; L-arginine from L-ornithine and carbamoyl phosphate: step 1/3. In terms of biological role, reversibly catalyzes the transfer of the carbamoyl group from carbamoyl phosphate (CP) to the N(epsilon) atom of ornithine (ORN) to produce L-citrulline. The chain is Ornithine carbamoyltransferase from Pyrobaculum aerophilum (strain ATCC 51768 / DSM 7523 / JCM 9630 / CIP 104966 / NBRC 100827 / IM2).